Here is a 121-residue protein sequence, read N- to C-terminus: NADH-quinone oxidoreductase subunit 7 (121 aa).

The next 3 helical transmembrane spans lie at 11 to 31, 65 to 85, and 93 to 113; these read ILVF…AAAV, LVSI…PWAV, and VAFW…AYEW.

It belongs to the complex I subunit 3 family. NDH-1 is composed of at least 14 different subunits, Nqo1 to Nqo14. The complex has a L-shaped structure, with the hydrophobic arm (subunits Nqo7, Nqo8, Nqo10 to Nqo14) embedded in the inner membrane and the hydrophilic peripheral arm (subunits Nqo1 to Nqo6, Nqo9) protruding into the bacterial cytoplasm. The hydrophilic domain contains all the redox centers.

It localises to the cell inner membrane. It catalyses the reaction a quinone + NADH + 5 H(+)(in) = a quinol + NAD(+) + 4 H(+)(out). In terms of biological role, NDH-1 shuttles electrons from NADH, via FMN and iron-sulfur (Fe-S) centers, to quinones in the respiratory chain. The immediate electron acceptor for the enzyme in this species is believed to be ubiquinone. Couples the redox reaction to proton translocation (for every two electrons transferred, four hydrogen ions are translocated across the cytoplasmic membrane), and thus conserves the redox energy in a proton gradient. The chain is NADH-quinone oxidoreductase subunit 7 (nqo7) from Paracoccus denitrificans.